A 153-amino-acid polypeptide reads, in one-letter code: Cell division protein SepF (153 aa).

It belongs to the SepF family. As to quaternary structure, homodimer. Interacts with FtsZ.

The protein resides in the cytoplasm. Cell division protein that is part of the divisome complex and is recruited early to the Z-ring. Probably stimulates Z-ring formation, perhaps through the cross-linking of FtsZ protofilaments. Its function overlaps with FtsA. The polypeptide is Cell division protein SepF (Clostridium novyi (strain NT)).